A 118-amino-acid chain; its full sequence is UPF0449 protein C19orf25 homolog (118 aa).

Phosphotyrosine is present on tyrosine 63. The stretch at 69–105 (YVAMNQRLQQAGAQLEQKRADLQQAGEELERDISQVG) forms a coiled coil.

It belongs to the UPF0449 family.

The polypeptide is UPF0449 protein C19orf25 homolog (Bos taurus (Bovine)).